A 698-amino-acid polypeptide reads, in one-letter code: Probable xyloglucan glycosyltransferase 2 (698 aa).

Helical transmembrane passes span 124 to 144 (GFLALSLLALAVELAAYWNGW) and 190 to 210 (ILLFVIQSMDRLVLCLGCFWI). Asp272 is an active-site residue. Residues Asp331 and Asp333 each coordinate substrate. Residue Asp425 is part of the active site. The next 4 membrane-spanning stretches (helical) occupy residues 503–523 (LILPFYSFTLFCVILPLTMFV), 528–548 (LPVWVICYVPVCMSFLNILPS), 653–668 (LALSLLLLTAATRSLL), and 673–693 (IHFYFLLFQGVSFLFVGLDLI).

It belongs to the glycosyltransferase 2 family. Plant cellulose synthase-like C subfamily.

It is found in the golgi apparatus membrane. In terms of biological role, probable beta-1,4-glucan synthase rather involved in the synthesis of the xyloglucan backbone than cellulose. Seems to work simultaneously with xyloglucan 6-xylosyltransferase. Xyloglucan is a noncellulosic polysaccharides of plant cell wall and consists of a glucan backbone substituted by xylose, galactose and fucose. This Oryza sativa subsp. indica (Rice) protein is Probable xyloglucan glycosyltransferase 2 (CSLC2).